The following is a 254-amino-acid chain: Thiazole synthase (254 aa).

Residue Lys95 is the Schiff-base intermediate with DXP of the active site. Residues Gly156, 182–183, and 204–205 contribute to the 1-deoxy-D-xylulose 5-phosphate site; these read AG and NT.

This sequence belongs to the ThiG family. As to quaternary structure, homotetramer. Forms heterodimers with either ThiH or ThiS.

The protein localises to the cytoplasm. It carries out the reaction [ThiS sulfur-carrier protein]-C-terminal-Gly-aminoethanethioate + 2-iminoacetate + 1-deoxy-D-xylulose 5-phosphate = [ThiS sulfur-carrier protein]-C-terminal Gly-Gly + 2-[(2R,5Z)-2-carboxy-4-methylthiazol-5(2H)-ylidene]ethyl phosphate + 2 H2O + H(+). Its pathway is cofactor biosynthesis; thiamine diphosphate biosynthesis. Its function is as follows. Catalyzes the rearrangement of 1-deoxy-D-xylulose 5-phosphate (DXP) to produce the thiazole phosphate moiety of thiamine. Sulfur is provided by the thiocarboxylate moiety of the carrier protein ThiS. In vitro, sulfur can be provided by H(2)S. The polypeptide is Thiazole synthase (Shewanella oneidensis (strain ATCC 700550 / JCM 31522 / CIP 106686 / LMG 19005 / NCIMB 14063 / MR-1)).